Reading from the N-terminus, the 95-residue chain is Aspartyl/glutamyl-tRNA(Asn/Gln) amidotransferase subunit C (95 aa).

The protein belongs to the GatC family. Heterotrimer of A, B and C subunits.

It catalyses the reaction L-glutamyl-tRNA(Gln) + L-glutamine + ATP + H2O = L-glutaminyl-tRNA(Gln) + L-glutamate + ADP + phosphate + H(+). The enzyme catalyses L-aspartyl-tRNA(Asn) + L-glutamine + ATP + H2O = L-asparaginyl-tRNA(Asn) + L-glutamate + ADP + phosphate + 2 H(+). Its function is as follows. Allows the formation of correctly charged Asn-tRNA(Asn) or Gln-tRNA(Gln) through the transamidation of misacylated Asp-tRNA(Asn) or Glu-tRNA(Gln) in organisms which lack either or both of asparaginyl-tRNA or glutaminyl-tRNA synthetases. The reaction takes place in the presence of glutamine and ATP through an activated phospho-Asp-tRNA(Asn) or phospho-Glu-tRNA(Gln). The protein is Aspartyl/glutamyl-tRNA(Asn/Gln) amidotransferase subunit C of Rhodospirillum centenum (strain ATCC 51521 / SW).